Reading from the N-terminus, the 344-residue chain is 4-dimethylallyltryptophan N-methyltransferase easF (344 aa).

The protein belongs to the methyltransferase superfamily. In terms of assembly, homodimer.

It catalyses the reaction 4-(3-methylbut-2-enyl)-L-tryptophan + S-adenosyl-L-methionine = 4-(3-methylbut-2-enyl)-L-abrine + S-adenosyl-L-homocysteine + H(+). Its pathway is alkaloid biosynthesis; ergot alkaloid biosynthesis. Its function is as follows. 4-dimethylallyltryptophan N-methyltransferase; part of the gene cluster that mediates the biosynthesis of fungal ergot alkaloid. DmaW catalyzes the first step of ergot alkaloid biosynthesis by condensing dimethylallyl diphosphate (DMAP) and tryptophan to form 4-dimethylallyl-L-tryptophan. The second step is catalyzed by the methyltransferase easF that methylates 4-dimethylallyl-L-tryptophan in the presence of S-adenosyl-L-methionine, resulting in the formation of 4-dimethylallyl-L-abrine. The catalase easC and the FAD-dependent oxidoreductase easE then transform 4-dimethylallyl-L-abrine to chanoclavine-I which is further oxidized by easD in the presence of NAD(+), resulting in the formation of chanoclavine-I aldehyde. Agroclavine dehydrogenase easG then mediates the conversion of chanoclavine-I aldehyde to agroclavine via a non-enzymatic adduct reaction: the substrate is an iminium intermediate that is formed spontaneously from chanoclavine-I aldehyde in the presence of glutathione. The presence of easA is not required to complete this reaction. Further conversion of agroclavine to paspalic acid is a two-step process involving oxidation of agroclavine to elymoclavine and of elymoclavine to paspalic acid, the second step being performed by the elymoclavine oxidase cloA. Paspalic acid is then further converted to D-lysergic acid. Ergopeptines are assembled from D-lysergic acid and three different amino acids by the D-lysergyl-peptide-synthetases composed each of a monomudular and a trimodular nonribosomal peptide synthetase subunit. LpsB and lpsC encode the monomodular subunits responsible for D-lysergic acid activation and incorporation into the ergopeptine backbone. LpsA1 and A2 subunits encode the trimodular nonribosomal peptide synthetase assembling the tripeptide portion of ergopeptines. LpsA1 is responsible for formation of the major ergopeptine, ergotamine, and lpsA2 for alpha-ergocryptine, the minor ergopeptine of the total alkaloid mixture elaborated by C.purpurea. D-lysergyl-tripeptides are assembled by the nonribosomal peptide synthetases and released as N-(D-lysergyl-aminoacyl)-lactams. Cyclolization of the D-lysergyl-tripeptides is performed by the Fe(2+)/2-ketoglutarate-dependent dioxygenase easH which introduces a hydroxyl group into N-(D-lysergyl-aminoacyl)-lactam at alpha-C of the aminoacyl residue followed by spontaneous condensation with the terminal lactam carbonyl group. The protein is 4-dimethylallyltryptophan N-methyltransferase easF of Claviceps purpurea (strain 20.1) (Ergot fungus).